Consider the following 528-residue polypeptide: Na(+)/H(+) antiporter NhaB (528 aa).

11 helical membrane-spanning segments follow: residues 23–43 (VAII…NPFV), 45–65 (GWLL…CYPL), 90–110 (LVAN…IYFM), 136–156 (CFAA…AVVI), 204–224 (LLMH…VGEP), 237–257 (FGEF…CGLI), 305–325 (GIIA…VGLI), 350–370 (EEAL…AVII), 392–412 (LALF…VFVG), 450–470 (ATPN…APLI), and 479–499 (VMAL…IMFF).

This sequence belongs to the NhaB Na(+)/H(+) (TC 2.A.34) antiporter family.

The protein localises to the cell inner membrane. The catalysed reaction is 2 Na(+)(in) + 3 H(+)(out) = 2 Na(+)(out) + 3 H(+)(in). Its function is as follows. Na(+)/H(+) antiporter that extrudes sodium in exchange for external protons. Can also transport lithium and potassium. The sequence is that of Na(+)/H(+) antiporter NhaB from Vibrio parahaemolyticus serotype O3:K6 (strain RIMD 2210633).